We begin with the raw amino-acid sequence, 249 residues long: Exosome complex component Rrp41 (249 aa).

Belongs to the RNase PH family. Rrp41 subfamily. As to quaternary structure, component of the archaeal exosome complex. Forms a hexameric ring-like arrangement composed of 3 Rrp41-Rrp42 heterodimers. The hexameric ring associates with a trimer of Rrp4 and/or Csl4 subunits.

It localises to the cytoplasm. Its function is as follows. Catalytic component of the exosome, which is a complex involved in RNA degradation. Has 3'-&gt;5' exoribonuclease activity. Can also synthesize heteromeric RNA-tails. The polypeptide is Exosome complex component Rrp41 (Thermococcus onnurineus (strain NA1)).